We begin with the raw amino-acid sequence, 301 residues long: ADP,ATP carrier protein 1 (301 aa).

Solcar repeat units lie at residues 8-100 (YGFA…YKQV), 113-203 (RYFL…AKGM), and 210-299 (TSIF…VKAL). Transmembrane regions (helical) follow at residues 10–39 (FAKD…LLLQ), 77–101 (LANV…KQVF), 112–132 (WRYF…SLCF), 181–201 (VSVQ…DTAK), and 213–233 (FVSW…SYPF). Positions 82 and 94 each coordinate ADP. R237 contributes to the ADP binding site. The tract at residues 237-242 (RRRMMM) is important for transport activity. The short motif at 237–242 (RRRMMM) is the Nucleotide carrier signature motif element. The chain crosses the membrane as a helical span at residues 276 to 293 (AFSNVLRGTGGALVLVFY).

Belongs to the mitochondrial carrier (TC 2.A.29) family. In terms of assembly, monomer.

The protein resides in the mitochondrion inner membrane. The enzyme catalyses ADP(in) + ATP(out) = ADP(out) + ATP(in). With respect to regulation, the matrix-open state (m-state) is inhibited by the membrane-permeable bongkrekic acid (BKA). The cytoplasmic-open state (c-state) is inhibited by the membrane-impermeable toxic inhibitor carboxyatractyloside (CATR). Its function is as follows. ADP:ATP antiporter that mediates import of ADP into the mitochondrial matrix for ATP synthesis, and export of ATP out to fuel the cell. Cycles between the cytoplasmic-open state (c-state) and the matrix-open state (m-state): operates by the alternating access mechanism with a single substrate-binding site intermittently exposed to either the cytosolic (c-state) or matrix (m-state) side of the inner mitochondrial membrane. The polypeptide is ADP,ATP carrier protein 1 (Anopheles gambiae (African malaria mosquito)).